A 55-amino-acid chain; its full sequence is Putative virulence-regulating protein PA2146 (55 aa).

The segment at 1 to 55 (MAQHQGGKGNFAEDPKRASEAGKKGGQASGGNFKNDPQRASEAGKKGGQRSHGGN) is disordered. 2 stretches are compositionally biased toward basic and acidic residues: residues 11–23 (FAED…EAGK) and 36–45 (DPQRASEAGK).

This sequence belongs to the con-10 family.

Functionally, may be involved in the regulation of the production of pyocyanine, one of the major virulence factors secreted by P.aeruginosa, and other virulence factors. The sequence is that of Putative virulence-regulating protein PA2146 from Pseudomonas aeruginosa (strain ATCC 15692 / DSM 22644 / CIP 104116 / JCM 14847 / LMG 12228 / 1C / PRS 101 / PAO1).